The sequence spans 736 residues: Phosphoribosylformylglycinamidine synthase subunit PurL (736 aa).

His48 is an active-site residue. Positions 51 and 90 each coordinate ATP. Glu92 serves as a coordination point for Mg(2+). Substrate contacts are provided by residues Ser93–His96 and Arg115. His94 functions as the Proton acceptor in the catalytic mechanism. Asp116 serves as a coordination point for Mg(2+). Gln239 contacts substrate. Asp267 provides a ligand contact to Mg(2+). Glu311–Gln313 lines the substrate pocket. ATP-binding residues include Asp492 and Gly529. A Mg(2+)-binding site is contributed by Asn530. Ser532 contacts substrate.

It belongs to the FGAMS family. As to quaternary structure, monomer. Part of the FGAM synthase complex composed of 1 PurL, 1 PurQ and 2 PurS subunits.

The protein resides in the cytoplasm. It carries out the reaction N(2)-formyl-N(1)-(5-phospho-beta-D-ribosyl)glycinamide + L-glutamine + ATP + H2O = 2-formamido-N(1)-(5-O-phospho-beta-D-ribosyl)acetamidine + L-glutamate + ADP + phosphate + H(+). It participates in purine metabolism; IMP biosynthesis via de novo pathway; 5-amino-1-(5-phospho-D-ribosyl)imidazole from N(2)-formyl-N(1)-(5-phospho-D-ribosyl)glycinamide: step 1/2. In terms of biological role, part of the phosphoribosylformylglycinamidine synthase complex involved in the purines biosynthetic pathway. Catalyzes the ATP-dependent conversion of formylglycinamide ribonucleotide (FGAR) and glutamine to yield formylglycinamidine ribonucleotide (FGAM) and glutamate. The FGAM synthase complex is composed of three subunits. PurQ produces an ammonia molecule by converting glutamine to glutamate. PurL transfers the ammonia molecule to FGAR to form FGAM in an ATP-dependent manner. PurS interacts with PurQ and PurL and is thought to assist in the transfer of the ammonia molecule from PurQ to PurL. The protein is Phosphoribosylformylglycinamidine synthase subunit PurL of Beijerinckia indica subsp. indica (strain ATCC 9039 / DSM 1715 / NCIMB 8712).